The following is a 547-amino-acid chain: (R)-citramalate synthase (547 aa).

The region spanning 8–278 (LWLYDTTLRD…YDCIEPEKLA (271 aa)) is the Pyruvate carboxyltransferase domain.

The protein belongs to the alpha-IPM synthase/homocitrate synthase family.

It catalyses the reaction pyruvate + acetyl-CoA + H2O = (3R)-citramalate + CoA + H(+). It functions in the pathway amino-acid biosynthesis; L-isoleucine biosynthesis; 2-oxobutanoate from pyruvate: step 1/3. Functionally, catalyzes the condensation of pyruvate and acetyl-coenzyme A to form (R)-citramalate. The polypeptide is (R)-citramalate synthase (Synechocystis sp. (strain ATCC 27184 / PCC 6803 / Kazusa)).